The chain runs to 100 residues: Aspartyl/glutamyl-tRNA(Asn/Gln) amidotransferase subunit C (100 aa).

This sequence belongs to the GatC family. As to quaternary structure, heterotrimer of A, B and C subunits.

The catalysed reaction is L-glutamyl-tRNA(Gln) + L-glutamine + ATP + H2O = L-glutaminyl-tRNA(Gln) + L-glutamate + ADP + phosphate + H(+). It catalyses the reaction L-aspartyl-tRNA(Asn) + L-glutamine + ATP + H2O = L-asparaginyl-tRNA(Asn) + L-glutamate + ADP + phosphate + 2 H(+). Its function is as follows. Allows the formation of correctly charged Asn-tRNA(Asn) or Gln-tRNA(Gln) through the transamidation of misacylated Asp-tRNA(Asn) or Glu-tRNA(Gln) in organisms which lack either or both of asparaginyl-tRNA or glutaminyl-tRNA synthetases. The reaction takes place in the presence of glutamine and ATP through an activated phospho-Asp-tRNA(Asn) or phospho-Glu-tRNA(Gln). The protein is Aspartyl/glutamyl-tRNA(Asn/Gln) amidotransferase subunit C of Rickettsia typhi (strain ATCC VR-144 / Wilmington).